The sequence spans 484 residues: Synaptic vesicle membrane protein VAT-1 homolog (484 aa).

Low complexity-rich tracts occupy residues 1–13 (MSGE…QQNA) and 40–61 (SAST…PAAE). Disordered stretches follow at residues 1–65 (MSGE…KAPE) and 402–484 (IGKI…KEEN). Over residues 411–484 (PMKEEEKKEE…KKEEVKKEEN (74 aa)) the composition is skewed to basic and acidic residues.

The protein belongs to the zinc-containing alcohol dehydrogenase family. Quinone oxidoreductase subfamily.

This Danio rerio (Zebrafish) protein is Synaptic vesicle membrane protein VAT-1 homolog.